We begin with the raw amino-acid sequence, 1355 residues long: Transcription factor MAR1 (1355 aa).

Residues 23–52 (CTICRKRKVKCDKTRPHCNQCTKTGVAHLC) constitute a DNA-binding region (zn(2)-C6 fungal-type). 3 disordered regions span residues 586 to 614 (TTDNTRSGPPSNSNRNGSETPSVSPKDTN), 918 to 942 (SVPSSCNSSSVEDENTEEPNNLNQD), and 1221 to 1253 (PPISSAKNNMAWGTTPESEQGDHLTPNTTTSSL). The span at 589–603 (NTRSGPPSNSNRNGS) shows a compositional bias: low complexity. The span at 604-614 (ETPSVSPKDTN) shows a compositional bias: polar residues. The span at 918 to 927 (SVPSSCNSSS) shows a compositional bias: low complexity. Over residues 1225–1238 (SAKNNMAWGTTPES) the composition is skewed to polar residues.

It is found in the nucleus. Functionally, transcription factor that contributes to plasma membrane sphingolipid incorporation and membrane permeability, decreasing fluconazole accumulation. Regulates 337 genes under fluconazole stress, including several related to lipid biosynthesis pathways such as RSB1, encoding a sphingoid long-chain base efflux transporter. Associates with the promoter of RSB1 in the region containing two 5'-CCCCTCC-3' motifs and increases its promoter occupancy upon fluconazole stress. This chain is Transcription factor MAR1, found in Candida glabrata (strain ATCC 2001 / BCRC 20586 / JCM 3761 / NBRC 0622 / NRRL Y-65 / CBS 138) (Yeast).